We begin with the raw amino-acid sequence, 445 residues long: Exodeoxyribonuclease 7 large subunit (445 aa).

This sequence belongs to the XseA family. As to quaternary structure, heterooligomer composed of large and small subunits.

It localises to the cytoplasm. The catalysed reaction is Exonucleolytic cleavage in either 5'- to 3'- or 3'- to 5'-direction to yield nucleoside 5'-phosphates.. Functionally, bidirectionally degrades single-stranded DNA into large acid-insoluble oligonucleotides, which are then degraded further into small acid-soluble oligonucleotides. This chain is Exodeoxyribonuclease 7 large subunit, found in Staphylococcus epidermidis (strain ATCC 12228 / FDA PCI 1200).